Consider the following 277-residue polypeptide: 3-methyl-2-oxobutanoate hydroxymethyltransferase (277 aa).

Mg(2+) is bound by residues Asp53 and Asp96. 3-methyl-2-oxobutanoate contacts are provided by residues 53–54, Asp96, and Lys126; that span reads DS. Glu128 serves as a coordination point for Mg(2+). Residue Glu195 is the Proton acceptor of the active site.

It belongs to the PanB family. As to quaternary structure, homodecamer; pentamer of dimers. It depends on Mg(2+) as a cofactor.

The protein localises to the cytoplasm. It carries out the reaction 3-methyl-2-oxobutanoate + (6R)-5,10-methylene-5,6,7,8-tetrahydrofolate + H2O = 2-dehydropantoate + (6S)-5,6,7,8-tetrahydrofolate. Its pathway is cofactor biosynthesis; (R)-pantothenate biosynthesis; (R)-pantoate from 3-methyl-2-oxobutanoate: step 1/2. Functionally, catalyzes the reversible reaction in which hydroxymethyl group from 5,10-methylenetetrahydrofolate is transferred onto alpha-ketoisovalerate to form ketopantoate. In Chlorobaculum parvum (strain DSM 263 / NCIMB 8327) (Chlorobium vibrioforme subsp. thiosulfatophilum), this protein is 3-methyl-2-oxobutanoate hydroxymethyltransferase.